The sequence spans 484 residues: Probable UDP-N-acetylglucosamine pyrophosphorylase (484 aa).

The Substrate binding signature appears at 107–110; it reads LAGG. Residues 107 to 110, K121, Q200, and G226 each bind UTP; that span reads LAGG. Residue N227 coordinates substrate. Residue D255 participates in UTP binding. Positions 304 to 305 match the Substrate binding motif; sequence EY. K377 lines the UTP pocket. K407 lines the substrate pocket.

It belongs to the UDPGP type 1 family.

The protein localises to the cytoplasm. It carries out the reaction N-acetyl-alpha-D-glucosamine 1-phosphate + UTP + H(+) = UDP-N-acetyl-alpha-D-glucosamine + diphosphate. It functions in the pathway nucleotide-sugar biosynthesis; UDP-N-acetyl-alpha-D-glucosamine biosynthesis; UDP-N-acetyl-alpha-D-glucosamine from N-acetyl-alpha-D-glucosamine 1-phosphate: step 1/1. The polypeptide is Probable UDP-N-acetylglucosamine pyrophosphorylase (Caenorhabditis elegans).